The sequence spans 131 residues: Snaclec A13 (131 aa).

Disulfide bonds link cysteine 4–cysteine 15, cysteine 32–cysteine 125, and cysteine 100–cysteine 117. The C-type lectin domain occupies 11-126 (YEGHCYKVFN…CELAYHFICM (116 aa)).

It belongs to the snaclec family. Heterodimer; disulfide-linked. In terms of tissue distribution, expressed by the venom gland.

It localises to the secreted. In terms of biological role, interferes with one step of hemostasis (modulation of platelet aggregation, or coagulation cascade, for example). This chain is Snaclec A13, found in Macrovipera lebetinus (Levantine viper).